A 298-amino-acid chain; its full sequence is NAD kinase (298 aa).

Aspartate 80 serves as the catalytic Proton acceptor. NAD(+)-binding positions include 80–81 (DG), 154–155 (ND), arginine 182, aspartate 184, 195–200 (TAYALS), alanine 219, and glutamine 253.

This sequence belongs to the NAD kinase family. A divalent metal cation is required as a cofactor.

Its subcellular location is the cytoplasm. The enzyme catalyses NAD(+) + ATP = ADP + NADP(+) + H(+). Functionally, involved in the regulation of the intracellular balance of NAD and NADP, and is a key enzyme in the biosynthesis of NADP. Catalyzes specifically the phosphorylation on 2'-hydroxyl of the adenosine moiety of NAD to yield NADP. This is NAD kinase from Paracidovorax citrulli (strain AAC00-1) (Acidovorax citrulli).